Here is a 763-residue protein sequence, read N- to C-terminus: uncharacterized protein (763 aa).

A TR mART core domain is found at 380 to 607; that stretch reads DSVLNPFNTN…YNIKVITMRL (228 aa). The chain crosses the membrane as a helical span at residues 684-700; sequence SYVSIYALLCPLLTNIY.

It localises to the membrane. This is an uncharacterized protein from Acanthamoeba polyphaga mimivirus (APMV).